A 541-amino-acid chain; its full sequence is Effector protein hopAB1 (541 aa).

Disordered stretches follow at residues 1 to 94 (MPGI…EAQQ), 168 to 222 (QRAL…RHPQ), and 317 to 338 (RQTT…SGRR). Positions 18–31 (TDGEPVTEREHDSS) are enriched in basic and acidic residues. A compositionally biased stretch (low complexity) spans 183–196 (SSSGSSQRSLIGRS).

The protein belongs to the HopAB family.

It is found in the secreted. In terms of biological role, effector protein that plays different roles depending on the species and plant cultivars that interact with the pathogen. Acts as a virulence determinant by enhancing the development of disease symptoms and bacterial growth. Acts as an avirulence factor by eliciting hypersensitive response (HR) and plant resistance. The chain is Effector protein hopAB1 (hopAB1) from Pseudomonas savastanoi (Pseudomonas syringae pv. savastanoi).